The chain runs to 127 residues: Large ribosomal subunit protein bL21c (127 aa).

It belongs to the bacterial ribosomal protein bL21 family. As to quaternary structure, part of the 50S ribosomal subunit.

The protein resides in the plastid. Its subcellular location is the chloroplast. Its function is as follows. This protein binds to 23S rRNA. The polypeptide is Large ribosomal subunit protein bL21c (Adiantum capillus-veneris (Maidenhair fern)).